A 349-amino-acid polypeptide reads, in one-letter code: Peroxidase 23 (349 aa).

The signal sequence occupies residues 1-29; sequence MGFSSSLSCSAMGALIVGCLLLQASNSNA. Q30 carries the pyrrolidone carboxylic acid modification. Intrachain disulfides connect C40–C120, C73–C78, C126–C329, and C206–C238. Catalysis depends on H71, which acts as the Proton acceptor. The Ca(2+) site is built by D72, V75, G77, D79, and S81. N86 is a glycosylation site (N-linked (GlcNAc...) asparagine). Residue P168 coordinates substrate. H199 contributes to the heme b binding site. Ca(2+) is bound at residue T200. Residues N217 and N243 are each glycosylated (N-linked (GlcNAc...) asparagine). D251, T254, and D259 together coordinate Ca(2+).

Belongs to the peroxidase family. Classical plant (class III) peroxidase subfamily. It depends on heme b as a cofactor. The cofactor is Ca(2+).

It localises to the secreted. The protein localises to the vacuole. It carries out the reaction 2 a phenolic donor + H2O2 = 2 a phenolic radical donor + 2 H2O. Its function is as follows. Removal of H(2)O(2), oxidation of toxic reductants, biosynthesis and degradation of lignin, suberization, auxin catabolism, response to environmental stresses such as wounding, pathogen attack and oxidative stress. These functions might be dependent on each isozyme/isoform in each plant tissue. The polypeptide is Peroxidase 23 (PER23) (Arabidopsis thaliana (Mouse-ear cress)).